The primary structure comprises 355 residues: Protein ECERIFERUM 16 (355 aa).

Disordered regions lie at residues 1 to 60 (MDSK…LPSN) and 296 to 315 (HSST…KIHM). A compositionally biased stretch (basic residues) spans 7-28 (AKSKRAHTLHHSKKSHSVHKPK). 2 stretches are compositionally biased toward polar residues: residues 41-53 (QGNQ…QSRR) and 296-310 (HSST…NPSD).

Interacts with RST1. In terms of tissue distribution, expressed in taproots, lateral roots, root tips, leaf veins, cauline leaves, inflorescences, flowers, and siliques.

The protein resides in the cytoplasm. Its subcellular location is the cytosol. The protein localises to the endoplasmic reticulum. In terms of biological role, together with RST1, acts as a cofactor of the cytoplasmic exosome and connects the cytosolic RNA exosome to the SKI complex. Acts as a post-transcriptional gene silencing (PTGS) suppressor. CER16/RIPR can, like RST1 suppress the production of small interfering RNAs (siRNAs) from the CER3 locus, which is involved in cuticule membrane and wax production, and in the typhine and sporopollenin biosynthesis of pollen. The polypeptide is Protein ECERIFERUM 16 (Arabidopsis thaliana (Mouse-ear cress)).